Reading from the N-terminus, the 623-residue chain is Chaperone protein DnaK (623 aa).

Residues 582–603 (QQQQAAEQAAQQQSGGQQASGS) are compositionally biased toward low complexity. The interval 582–623 (QQQQAAEQAAQQQSGGQQASGSNPGKDPNVVDADYEVVNDKK) is disordered. The span at 614-623 (ADYEVVNDKK) shows a compositional bias: acidic residues.

Belongs to the heat shock protein 70 family.

Its function is as follows. Acts as a chaperone. This is Chaperone protein DnaK from Methanocella arvoryzae (strain DSM 22066 / NBRC 105507 / MRE50).